We begin with the raw amino-acid sequence, 170 residues long: Probable inosine/xanthosine triphosphatase (170 aa).

Residue E31 participates in Mg(2+) binding.

It belongs to the YjjX NTPase family. As to quaternary structure, homodimer. Mg(2+) is required as a cofactor. Requires Mn(2+) as cofactor.

The enzyme catalyses XTP + H2O = XDP + phosphate + H(+). It carries out the reaction ITP + H2O = IDP + phosphate + H(+). In terms of biological role, phosphatase that hydrolyzes non-canonical purine nucleotides such as XTP and ITP to their respective diphosphate derivatives. Probably excludes non-canonical purines from DNA/RNA precursor pool, thus preventing their incorporation into DNA/RNA and avoiding chromosomal lesions. This chain is Probable inosine/xanthosine triphosphatase, found in Oceanobacillus iheyensis (strain DSM 14371 / CIP 107618 / JCM 11309 / KCTC 3954 / HTE831).